The sequence spans 891 residues: Extended synaptotagmin-3 (891 aa).

The interval 1-30 (MQPEEPCAPSAPGGPDVPERGQRSRDPGPR) is disordered. Over 1–32 (MQPEEPCAPSAPGGPDVPERGQRSRDPGPRLS) the chain is Cytoplasmic. Basic and acidic residues predominate over residues 17–28 (VPERGQRSRDPG). A helical membrane pass occupies residues 33-53 (GQLLPELYSFVARVLFYLAPV). A topological domain (lumenal) is located at residue Tyr-54. A helical membrane pass occupies residues 55-75 (LAGYLGLSVTWLLLGALLWMW). The Cytoplasmic portion of the chain corresponds to 76 to 891 (WRRNRRGKLG…ELTADGQPRS (816 aa)). Residues 118–295 (DVERVEWANK…LPNRVTVPVK (178 aa)) form the SMP-LTD domain. 2 consecutive C2 domains span residues 292 to 412 (VPVK…DEWF) and 430 to 570 (SLLT…QLDH). Lys-325, Asp-326, Asp-336, Asp-383, Glu-384, Asp-385, Asp-387, Asp-389, and Asp-390 together coordinate Ca(2+). The disordered stretch occupies residues 652–711 (SAATTDPEPMPEPQGPGPEPKGKDSARGLCESPGKKKNPATTFLTVPGLHSPGPIKSPRP). Positions 659-670 (EPMPEPQGPGPE) are enriched in pro residues. The region spanning 759–881 (RLGEIQLTVR…DLIKGFSQWY (123 aa)) is the C2 3 domain. The tract at residues 806–813 (RRWASRKK) is required for phosphatidylinositol 4,5-bisphosphate-dependent location at the cell membrane.

Belongs to the extended synaptotagmin family.

It localises to the cell membrane. The protein localises to the endoplasmic reticulum membrane. Its function is as follows. Tethers the endoplasmic reticulum to the cell membrane and promotes the formation of appositions between the endoplasmic reticulum and the cell membrane. Binds glycerophospholipids in a barrel-like domain and may play a role in cellular lipid transport. In Mus musculus (Mouse), this protein is Extended synaptotagmin-3 (Esyt3).